Reading from the N-terminus, the 382-residue chain is Mannitol-1-phosphate 5-dehydrogenase (382 aa).

3 to 14 (ALHFGAGNIGRG) lines the NAD(+) pocket.

This sequence belongs to the mannitol dehydrogenase family.

The catalysed reaction is D-mannitol 1-phosphate + NAD(+) = beta-D-fructose 6-phosphate + NADH + H(+). The protein is Mannitol-1-phosphate 5-dehydrogenase of Klebsiella pneumoniae (strain 342).